The primary structure comprises 669 residues: MGKDIKDEILSLRDAIKKWDREYYVDSSPTVGDVTYDKALLRLQYLENRYPEYKTLDSPTLKFGSDLLNDFKEVEHSYPILSLDKAYDVKELLLWVEKMSLEGSNLGFDMGISAEPKIDGCSIVLYYKDGILEKALTRGDGRFGNNVIENVRTIKNVPLCIGERVELVLRGEIYITKKDFLKINHTLDDSYINARNLTSGILRRINSREVVNFPLDIFVYDILYSSLELNTNHDAFDKLKHFGFKLNPFCKFFCGKNLGENIINYVKEIEEQRERFEYEIDGVVLKVDDFRLRDVLGYTSHHPKWSIAYKFESLRAVSKVIDIVVQVGRSGKITPVANIEKVLIAGAFITSASLHNQDYIDSIGLNVKDVVAISRRGDVIPAVELVVEKLSVGNFKIPNYCPSCKKSLIKEGAHLFCVNIHCPLKIMGHIKYFCSKKCMNIVGLSEKTIEFLFNMNFISSEIDLYTFDFDRLIGLKGFNFKRVNKLKRSIEESKNRPFKKLLLAMGIKDLGINTILLLINNNLNSFDAISLLCQDNKNALVKLLDIKGIGERIAFNIIRAFNDKIILDKFNFFKGLGFKMQEDSINCVVDSSFLFGKKFCITGSFDEYPRHVLIDKITKKGAIFNSSVSRYLDFLLVGKSPGLKLKKANNLGIKILSLFDIKNLVNLDD.

NAD(+)-binding positions include 33 to 37 (DVTYD), 82 to 83 (SL), and E115. K117 serves as the catalytic N6-AMP-lysine intermediate. NAD(+) contacts are provided by R138, E172, K286, and K310. Zn(2+) contacts are provided by C401, C404, C417, and C422. The BRCT domain maps to 589-669 (VDSSFLFGKK…DIKNLVNLDD (81 aa)).

The protein belongs to the NAD-dependent DNA ligase family. LigA subfamily. The cofactor is Mg(2+). It depends on Mn(2+) as a cofactor.

It carries out the reaction NAD(+) + (deoxyribonucleotide)n-3'-hydroxyl + 5'-phospho-(deoxyribonucleotide)m = (deoxyribonucleotide)n+m + AMP + beta-nicotinamide D-nucleotide.. In terms of biological role, DNA ligase that catalyzes the formation of phosphodiester linkages between 5'-phosphoryl and 3'-hydroxyl groups in double-stranded DNA using NAD as a coenzyme and as the energy source for the reaction. It is essential for DNA replication and repair of damaged DNA. This Borrelia duttonii (strain Ly) protein is DNA ligase.